Reading from the N-terminus, the 170-residue chain is Transcriptional repressor NrdR (170 aa).

The segment at 3-34 is a zinc-finger region; sequence CPFCGTQDTKVVDSRLVSEGAQVRRRRTCIHC. One can recognise an ATP-cone domain in the interval 49-139; sequence PKLIKSDGSR…VYRSFKDISE (91 aa). Positions 151–170 are disordered; it reads SVSIPKSKKTAPESKKEDQA. Over residues 160-170 the composition is skewed to basic and acidic residues; sequence TAPESKKEDQA.

It belongs to the NrdR family. It depends on Zn(2+) as a cofactor.

In terms of biological role, negatively regulates transcription of bacterial ribonucleotide reductase nrd genes and operons by binding to NrdR-boxes. The polypeptide is Transcriptional repressor NrdR (Marinomonas sp. (strain MWYL1)).